Reading from the N-terminus, the 358-residue chain is Programmed cell death protein 2-like (358 aa).

Ala-2 is subject to N-acetylalanine. At Ser-20 the chain carries Phosphoserine. The residue at position 22 (Thr-22) is a Phosphothreonine.

Higher expression in lung, colon, mammary gland, cervix, stomach and small intestine.

In terms of biological role, over-expression suppresses AP1, CREB, NFAT, and NF-kB transcriptional activation, and delays cell cycle progression at S phase. This is Programmed cell death protein 2-like (PDCD2L) from Homo sapiens (Human).